The chain runs to 237 residues: Ribonuclease PH (237 aa).

Phosphate-binding positions include R86 and 124 to 126 (GTR).

It belongs to the RNase PH family. Homohexameric ring arranged as a trimer of dimers.

The enzyme catalyses tRNA(n+1) + phosphate = tRNA(n) + a ribonucleoside 5'-diphosphate. Functionally, phosphorolytic 3'-5' exoribonuclease that plays an important role in tRNA 3'-end maturation. Removes nucleotide residues following the 3'-CCA terminus of tRNAs; can also add nucleotides to the ends of RNA molecules by using nucleoside diphosphates as substrates, but this may not be physiologically important. Probably plays a role in initiation of 16S rRNA degradation (leading to ribosome degradation) during starvation. The protein is Ribonuclease PH of Shewanella sp. (strain ANA-3).